The primary structure comprises 307 residues: Recombination-associated protein RdgC (307 aa).

Belongs to the RdgC family.

It localises to the cytoplasm. It is found in the nucleoid. Functionally, may be involved in recombination. The sequence is that of Recombination-associated protein RdgC from Burkholderia orbicola (strain MC0-3).